The primary structure comprises 172 residues: uncharacterized protein (172 aa).

A Ferritin-like diiron domain is found at 1–148 (MANSQKVIDV…TIHDFFENGN (148 aa)).

This is an uncharacterized protein from Ureaplasma urealyticum (Ureaplasma urealyticum biotype 2).